A 408-amino-acid chain; its full sequence is Pleckstrin homology domain-containing family O member 1 (408 aa).

The interval Met-1 to Pro-21 is disordered. One can recognise a PH domain in the interval Ala-20–Thr-131. An interaction with capping proteins (CPs) region spans residues Arg-132–Glu-192. An interaction with ATM, CKIP, IFP35 and NMI region spans residues Asn-135–Ile-307. Positions Leu-217–Glu-264 are disordered. At Ser-226 the chain carries Phosphoserine. A compositionally biased stretch (polar residues) spans Ile-229–Ser-240. Phosphoserine occurs at positions 270 and 341. Residues Ile-307–Met-408 form a negative regulator of AP-1 activity region. 2 disordered regions span residues Val-325 to Glu-348 and Thr-389 to Met-408. Residues Thr-389 to Ser-401 show a composition bias toward polar residues.

Heterodimer or homodimer. Interacts with CK2 and actin capping subunits (capping protein CP-alpha and CP-beta). CKIP1 and CK2 together inhibit the activity of actin capping protein at the barbed ends of actin filaments. Interacts with ATM, IFP35, JUN, JUND, NMI and PI3K. Interacts with AKT1, AKT2 and AKT3 (each isozyme of PKB), PtdIns(3,5)P2, PtdIns(4,5)P2 and PtdIns(3,4,5)P2. In terms of processing, C-terminal fragments could be released during apoptosis via caspase-3-dependent cleavage.

The protein localises to the cell membrane. The protein resides in the nucleus. It is found in the cytoplasm. Plays a role in the regulation of the actin cytoskeleton through its interactions with actin capping protein (CP). May function to target CK2 to the plasma membrane thereby serving as an adapter to facilitate the phosphorylation of CP by protein kinase 2 (CK2). Appears to target ATM to the plasma membrane. Appears to also inhibit tumor cell growth by inhibiting AKT-mediated cell-survival. Also implicated in PI3K-regulated muscle differentiation, the regulation of AP-1 activity (plasma membrane bound AP-1 regulator that translocates to the nucleus) and the promotion of apoptosis induced by tumor necrosis factor TNF. When bound to PKB, it inhibits it probably by decreasing PKB level of phosphorylation. This Mus musculus (Mouse) protein is Pleckstrin homology domain-containing family O member 1 (Plekho1).